The sequence spans 66 residues: Small vasohibin-binding protein (66 aa).

Basic and acidic residues predominate over residues 1–23 (MDPPARKEKSKVKEPAFRVEKAK). The segment at 1-30 (MDPPARKEKSKVKEPAFRVEKAKQKSAQQE) is disordered. Residues 5 to 52 (ARKEKSKVKEPAFRVEKAKQKSAQQELKQRQRAEIYALNRVMTELEQQ) adopt a coiled-coil conformation.

This sequence belongs to the SVBP family. Interacts with VASH1 and VASH2. In terms of tissue distribution, highly expressed in bone marrow, spleen and testis.

Its subcellular location is the cytoplasm. The protein localises to the secreted. The protein resides in the cytoskeleton. Enhances the tyrosine carboxypeptidase activity of VASH1 and VASH2, thereby promoting the removal of the C-terminal tyrosine residue of alpha-tubulin. Also required to enhance the solubility and secretion of VASH1 and VASH2. Plays a role in axon and excitatory synapse formation. The protein is Small vasohibin-binding protein of Mus musculus (Mouse).